The sequence spans 364 residues: Dihydroorotase (364 aa).

Residues H14, H16, K98, H137, H180, and D258 each contribute to the Zn(2+) site. An N6-carboxylysine modification is found at K98.

Belongs to the metallo-dependent hydrolases superfamily. DHOase family. Class II DHOase subfamily. The cofactor is Zn(2+).

The catalysed reaction is (S)-dihydroorotate + H2O = N-carbamoyl-L-aspartate + H(+). It participates in pyrimidine metabolism; UMP biosynthesis via de novo pathway; (S)-dihydroorotate from bicarbonate: step 3/3. In terms of biological role, catalyzes the conversion of ureidosuccinic acid (USA) to dihydroorotate, the third step of the de novo pyrimidine biosynthetic pathway. The chain is Dihydroorotase (URA4) from Saccharomyces cerevisiae (strain ATCC 204508 / S288c) (Baker's yeast).